A 520-amino-acid chain; its full sequence is Ubiquitin carboxyl-terminal hydrolase MINDY-1 (520 aa).

The interval 1–155 (MADSCADTVD…ENEGAVAGAM (155 aa)) is disordered. Basic and acidic residues predominate over residues 26–37 (KNEDLEQTKPQK). The span at 43 to 54 (TEESSACVSQIK) shows a compositional bias: polar residues. Over residues 77-86 (ATSSASVTSK) the composition is skewed to low complexity. Polar residues-rich tracts occupy residues 93-112 (VINS…SFSM) and 132-146 (SAKS…SVQE). Cys-189 serves as the catalytic Nucleophile. Residue His-371 is the Proton acceptor of the active site. Disordered regions lie at residues 422 to 441 (SQKP…QQMQ) and 467 to 520 (ELAR…CCIL). A ubiquitin-binding domain (UBD) region spans residues 441 to 479 (QIDQDYLVAMSLQQEQGEAPGPLSDLELARQLQQEEYQQ). A compositionally biased stretch (low complexity) spans 469-498 (ARQLQQEEYQQPQTQQQQQQQPSAGQMRGQ). Residues 511-520 (KKEETDCCIL) show a composition bias toward basic and acidic residues.

This sequence belongs to the MINDY deubiquitinase family. FAM63 subfamily.

The enzyme catalyses Thiol-dependent hydrolysis of ester, thioester, amide, peptide and isopeptide bonds formed by the C-terminal Gly of ubiquitin (a 76-residue protein attached to proteins as an intracellular targeting signal).. Its function is as follows. Hydrolase that can specifically remove 'Lys-48'-linked conjugated ubiquitin from proteins. May play a regulatory role at the level of protein turnover. This chain is Ubiquitin carboxyl-terminal hydrolase MINDY-1 (mindy1), found in Danio rerio (Zebrafish).